The sequence spans 120 residues: uncharacterized protein (120 aa).

The PRD domain maps to 13 to 119 (VIDKDICKGM…YGLWMAANEE (107 aa)).

This is an uncharacterized protein from Escherichia coli (strain K12).